A 274-amino-acid chain; its full sequence is MQFSKMHGLGNDFMVIDGVTQNVYLTEDVIRKLADRHRGVGFDQLLLVEPPYDPELDFHYRIFNADGSEVAQCGNGARCFARFVTLKGLTNKQDIHVSTAKGKMVLTLKDEEKVRVNMGEPIWEPAQVPFTANKFEKNYILRTDLQTVLCGVVSMGNPHCVLQVEDINLAPVNELGPLLENHERFPERANIGFMQVVNRNHIKLRVFERGAGETQACGSGACGAVAVGIMQGVLDNNVQVDLPGGSLQIEWEGVGHPLYMTGDATHIYDGFIKL.

Asn11, Gln44, and Asn64 together coordinate substrate. Catalysis depends on Cys73, which acts as the Proton donor. Substrate-binding positions include 74–75, Asn157, Asn190, and 208–209; these read GN and ER. Cys217 serves as the catalytic Proton acceptor. 218–219 contributes to the substrate binding site; the sequence is GS.

The protein belongs to the diaminopimelate epimerase family. Homodimer.

The protein localises to the cytoplasm. It carries out the reaction (2S,6S)-2,6-diaminopimelate = meso-2,6-diaminopimelate. It participates in amino-acid biosynthesis; L-lysine biosynthesis via DAP pathway; DL-2,6-diaminopimelate from LL-2,6-diaminopimelate: step 1/1. Its function is as follows. Catalyzes the stereoinversion of LL-2,6-diaminopimelate (L,L-DAP) to meso-diaminopimelate (meso-DAP), a precursor of L-lysine and an essential component of the bacterial peptidoglycan. This chain is Diaminopimelate epimerase, found in Actinobacillus pleuropneumoniae serotype 7 (strain AP76).